The chain runs to 2261 residues: Phospholipid-transporting ATPase ABCA1 (2261 aa).

A lipid anchor (S-palmitoyl cysteine) is attached at Cys-3. Asn-14 is a glycosylation site (N-linked (GlcNAc...) asparagine). The helical transmembrane segment at 22-42 (TCQLLLEVAWPLFIFLILISV) threads the bilayer. The S-palmitoyl cysteine moiety is linked to residue Cys-23. Residues 43-639 (RLSYPPYEQH…DIFLRVMSRS (597 aa)) are Extracellular-facing. The interval 69–80 (WVQGIICNANNP) is annulus domain 1. Cysteines 75 and 309 form a disulfide. N-linked (GlcNAc...) asparagine glycosylation is found at Asn-98, Asn-151, Asn-161, Asn-196, Asn-244, Asn-292, Asn-337, and Asn-349. The annulus domain 2 stretch occupies residues 368–379 (SRIIWKALKPLL). Asn-400, Asn-478, Asn-489, and Asn-521 each carry an N-linked (GlcNAc...) asparagine glycan. Positions 564 to 594 (ERTNKIKDGYWDPGPRADPFEDMRYVWGGFA) are gateway domain. A run of 5 helical transmembrane segments spans residues 640–660 (MPLFMTLAWIYSVAVIIKGIV), 683–703 (FSWFISSLIPLLVSAGLLVVI), 716–736 (SVVFVFLSVFAVVTILQCFLI), 745–765 (LAAACGGIIYFTLYLPYVLCV), and 777–797 (IFASLLSPVAFGFGCEYFALF). The N-linked (GlcNAc...) asparagine glycan is linked to Asn-820. A helical membrane pass occupies residues 827-847 (MMLFDTFLYGVMTWYIEAVFP). The 233-residue stretch at 899 to 1131 (VSIQNLVKVY…LGTGYYLTLV (233 aa)) folds into the ABC transporter 1 domain. 933 to 940 (GHNGAGKT) contacts ATP. A helical transmembrane segment spans residues 1041–1057 (LSVALAFVGGSKVVILD). Ser-1042 bears the Phosphoserine; by PKA mark. 2 S-palmitoyl cysteine lipidation sites follow: Cys-1110 and Cys-1111. Residues Asn-1144 and Asn-1294 are each glycosylated (N-linked (GlcNAc...) asparagine). The segment at 1283–1312 (RPFTEDDAADPNDSDIDPESRETDLLSGMD) is disordered. The span at 1287–1299 (EDDAADPNDSDID) shows a compositional bias: acidic residues. Phosphoserine is present on Ser-1296. A helical transmembrane segment spans residues 1351 to 1371 (IVLPAVFVCIALVFSLIVPPF). Residues 1372-1656 (GKYPSLELQP…ALMTTSVDVL (285 aa)) are Extracellular-facing. Residue Asn-1453 is glycosylated (N-linked (GlcNAc...) asparagine). A disulfide bridge connects residues Cys-1463 and Cys-1477. N-linked (GlcNAc...) asparagine glycosylation is found at Asn-1504 and Asn-1637. Transmembrane regions (helical) follow at residues 1657 to 1677 (VSICVIFAMSFVPASFVVFLI), 1703 to 1723 (FVWDMCNYVVPATLVIIIFIC), 1735 to 1755 (LPVLALLLLLYGWSITPLMYP), 1768 to 1788 (VVLTSVNLFIGINGSVATFVL), 1802 to 1822 (ILKSVFLIFPHFCLGRGLIDM), and 1852 to 1872 (NLFAMAVEGVVFFLITVLIQY). Residues 1912–2144 (LEIKELTKIY…FGDGYTIVVR (233 aa)) form the ABC transporter 2 domain. 1946-1953 (GVNGAGKS) serves as a coordination point for ATP. N-linked (GlcNAc...) asparagine glycosylation occurs at Asn-2044. Position 2054 is a phosphoserine; by PKA (Ser-2054). N-linked (GlcNAc...) asparagine glycosylation occurs at Asn-2238.

The protein belongs to the ABC transporter superfamily. ABCA family. In terms of assembly, interacts with MEGF10. May interact with APOE1; functionally associated with APOE1 in the biogenesis of HDLs. Interacts with ABCA8; this interaction potentiates cholesterol efflux. Interacts with ABCA12 and NR1H2; this interaction is required for ABCA1 localization to the cell surface and is necessary for its normal activity and stability. Post-translationally, phosphorylation on Ser-2054 regulates phospholipid efflux. Palmitoylated by ZDHHC8. Palmitoylation is essential for localization to the plasma membrane. As to expression, widely expressed, but most abundant in macrophages.

It localises to the cell membrane. Its subcellular location is the endosome. The enzyme catalyses ATP + H2O + phospholipidSide 1 = ADP + phosphate + phospholipidSide 2.. It carries out the reaction a 1,2-diacyl-sn-glycero-3-phosphocholine(out) + ATP + H2O = a 1,2-diacyl-sn-glycero-3-phosphocholine(in) + ADP + phosphate + H(+). The catalysed reaction is a 1,2-diacyl-sn-glycero-3-phospho-L-serine(out) + ATP + H2O = a 1,2-diacyl-sn-glycero-3-phospho-L-serine(in) + ADP + phosphate + H(+). It catalyses the reaction a sphingomyelin(in) + ATP + H2O = a sphingomyelin(out) + ADP + phosphate + H(+). The enzyme catalyses cholesterol(in) + ATP + H2O = cholesterol(out) + ADP + phosphate + H(+). ATPase activity is decreased by cholesterol and ceramide. ATPase activity is stimulated by phosphatidylcholine and to a lesser degree by phosphatidylserine and sphingomyelin. Phospholipid translocase activity is highly reduced by berylium fluoride and aluminum flouride and reduced by N-ethylmaleimide. Catalyzes the translocation of specific phospholipids from the cytoplasmic to the extracellular/lumenal leaflet of membrane coupled to the hydrolysis of ATP. Thereby, participates in phospholipid transfer to apolipoproteins to form nascent high density lipoproteins/HDLs. Transports preferentially phosphatidylcholine over phosphatidylserine. May play a similar role in the efflux of intracellular cholesterol to apolipoproteins and the formation of nascent high density lipoproteins/HDLs. Translocates phospholipids from the outer face of the plasma membrane and forces it through its gateway and annulus into an elongated hydrophobic tunnel in its extracellular domain. The polypeptide is Phospholipid-transporting ATPase ABCA1 (Homo sapiens (Human)).